We begin with the raw amino-acid sequence, 270 residues long: Pancreas transcription factor 1 subunit alpha (270 aa).

In terms of domain architecture, bHLH spans 119-171; that stretch reads QLRQAANVRERRRMQSINDAFEGLRSHIPTLPYEKRLSKVDTLRLAIGYINFL.

The protein resides in the nucleus. Functionally, transcription factor implicated in the cell fate determination in various organs. Binds to the E-box consensus sequence 5'-CANNTG-3'. Acts together with pdx1 to induce the pancreatic lineage within the endoderm. Plays a central role in directing the differentiation of retinal progenitors towards horizontal and amacrine fates. This chain is Pancreas transcription factor 1 subunit alpha (ptf1a), found in Xenopus laevis (African clawed frog).